The following is a 206-amino-acid chain: Small ribosomal subunit protein uS4 (206 aa).

In terms of domain architecture, S4 RNA-binding spans 96 to 156; that stretch reads GRLDNVVYRM…EKSKKQARIK (61 aa).

It belongs to the universal ribosomal protein uS4 family. In terms of assembly, part of the 30S ribosomal subunit. Contacts protein S5. The interaction surface between S4 and S5 is involved in control of translational fidelity.

In terms of biological role, one of the primary rRNA binding proteins, it binds directly to 16S rRNA where it nucleates assembly of the body of the 30S subunit. With S5 and S12 plays an important role in translational accuracy. The protein is Small ribosomal subunit protein uS4 of Mannheimia succiniciproducens (strain KCTC 0769BP / MBEL55E).